The primary structure comprises 31 residues: Cyclotide cter-E (31 aa).

The segment at residues 1–31 (GIPCAESCVWIPCTVTALLGCSCKDKVCYLD) is a cross-link (cyclopeptide (Gly-Asp)). Disulfide bonds link C4/C21, C8/C23, and C13/C28.

Contains 3 disulfide bonds. In terms of processing, this is a cyclic peptide.

In terms of biological role, probably participates in a plant defense mechanism. This Clitoria ternatea (Butterfly pea) protein is Cyclotide cter-E.